A 176-amino-acid polypeptide reads, in one-letter code: Lipoprotein signal peptidase (176 aa).

3 helical membrane-spanning segments follow: residues 12–32 (WYWM…WVLA), 67–87 (WQRW…TIWL), and 94–116 (MWRL…IDRL). Residues Asp-123 and Asp-141 contribute to the active site. Residues 137–157 (FNIADSAICVGAALIIIDSII) form a helical membrane-spanning segment.

The protein belongs to the peptidase A8 family.

It is found in the cell inner membrane. It catalyses the reaction Release of signal peptides from bacterial membrane prolipoproteins. Hydrolyzes -Xaa-Yaa-Zaa-|-(S,diacylglyceryl)Cys-, in which Xaa is hydrophobic (preferably Leu), and Yaa (Ala or Ser) and Zaa (Gly or Ala) have small, neutral side chains.. Its pathway is protein modification; lipoprotein biosynthesis (signal peptide cleavage). This protein specifically catalyzes the removal of signal peptides from prolipoproteins. The sequence is that of Lipoprotein signal peptidase from Shewanella woodyi (strain ATCC 51908 / MS32).